A 486-amino-acid polypeptide reads, in one-letter code: Coronin-1B (486 aa).

Residue Ser2 is modified to Phosphoserine; by PKC. WD repeat units follow at residues 80–120, 130–170, 174–213, 217–260, and 265–305; these read GHTG…LTSP, GHTK…ELYR, LHPDLIYNVSWNRNGSLFCSACKDKSVRIIDPRRGTLVAE, AHEG…EPMA, and DSSN…PYIH. Positions 404–444 are disordered; it reads LKVSRRNVLSDSRPTSAARPAAPAPAAPAPAAAASSSLSGA. Residues 432 to 444 are compositionally biased toward low complexity; the sequence is APAAAASSSLSGA. A coiled-coil region spans residues 446 to 484; that stretch reads EAGKLEEVMRELRALRALVKEQGERIGRLEEQLGRVENG.

It belongs to the WD repeat coronin family. Forms homooligomers, but does not form complexes with the other coronins. Interacts with Arp2/3 complex components, including ACTR2, ARPC1B and ARPC2. Binds actin. Post-translationally, phosphorylated in vivo by PKC in response to cholinergic stimulation. Phosphorylation on Ser-2 regulates the interaction with the Arp2/3 complex and cell motility in fibroblasts. Phosphorylation does not seem to affect subcellular location.

The protein resides in the cytoplasm. It is found in the cytoskeleton. Its subcellular location is the stress fiber. Functionally, regulates leading edge dynamics and cell motility in fibroblasts. May be involved in cytokinesis and signal transduction. The polypeptide is Coronin-1B (CORO1B) (Oryctolagus cuniculus (Rabbit)).